The primary structure comprises 141 residues: Nucleoside diphosphate kinase (141 aa).

Residues K11, F59, R87, T93, R104, and N114 each coordinate ATP. The Pros-phosphohistidine intermediate role is filled by H117.

The protein belongs to the NDK family. Homotetramer. Mg(2+) serves as cofactor.

Its subcellular location is the cytoplasm. It catalyses the reaction a 2'-deoxyribonucleoside 5'-diphosphate + ATP = a 2'-deoxyribonucleoside 5'-triphosphate + ADP. The enzyme catalyses a ribonucleoside 5'-diphosphate + ATP = a ribonucleoside 5'-triphosphate + ADP. Its function is as follows. Major role in the synthesis of nucleoside triphosphates other than ATP. The ATP gamma phosphate is transferred to the NDP beta phosphate via a ping-pong mechanism, using a phosphorylated active-site intermediate. In Ralstonia nicotianae (strain ATCC BAA-1114 / GMI1000) (Ralstonia solanacearum), this protein is Nucleoside diphosphate kinase.